A 189-amino-acid chain; its full sequence is Ras-like protein rasC (189 aa).

11 to 18 contributes to the GTP binding site; sequence GDGGVGKS. An Effector region motif is present at residues 33–41; that stretch reads YDPTIENSY. Residues 58 to 62 and 117 to 120 contribute to the GTP site; these read DTAGQ and NKAD. A Cysteine methyl ester modification is found at C186. C186 carries the S-geranylgeranyl cysteine lipid modification. The propeptide at 187–189 is removed in mature form; sequence IIL.

This sequence belongs to the small GTPase superfamily. Ras family.

The protein resides in the cell membrane. It catalyses the reaction GTP + H2O = GDP + phosphate + H(+). Its activity is regulated as follows. Alternates between an inactive form bound to GDP and an active form bound to GTP. Activated by a guanine nucleotide-exchange factor (GEF) and inactivated by a GTPase-activating protein (GAP). Functionally, ras proteins bind GDP/GTP and possess intrinsic GTPase activity. The protein is Ras-like protein rasC (rasC) of Dictyostelium discoideum (Social amoeba).